The chain runs to 247 residues: UPF0612 protein P20C8.01c (247 aa).

Coiled-coil stretches lie at residues 27–63 (IKRY…MKYE) and 138–225 (DTVQ…DARS).

This sequence belongs to the UPF0612 family.

Its subcellular location is the cytoplasm. The sequence is that of UPF0612 protein P20C8.01c from Schizosaccharomyces pombe (strain 972 / ATCC 24843) (Fission yeast).